Reading from the N-terminus, the 447-residue chain is GTPase Der (447 aa).

2 EngA-type G domains span residues 4-165 (QIIT…PEEE) and 180-357 (LQIV…KIWN). Residues 10-17 (GRPNVGKS), 57-61 (DTPGL), 119-122 (NKCE), 186-193 (GRPNAGKS), 233-237 (DTAGL), and 298-301 (NKWD) each bind GTP. Positions 358 to 443 (KKITTSKLNE…PIRFIYVKTK (86 aa)) constitute a KH-like domain.

Belongs to the TRAFAC class TrmE-Era-EngA-EngB-Septin-like GTPase superfamily. EngA (Der) GTPase family. In terms of assembly, associates with the 50S ribosomal subunit.

Functionally, GTPase that plays an essential role in the late steps of ribosome biogenesis. The protein is GTPase Der of Rickettsia peacockii (strain Rustic).